Consider the following 300-residue polypeptide: Acetylglutamate kinase (300 aa).

Substrate is bound by residues 73 to 74 (GG), arginine 95, and asparagine 197.

Belongs to the acetylglutamate kinase family. ArgB subfamily.

It localises to the cytoplasm. The enzyme catalyses N-acetyl-L-glutamate + ATP = N-acetyl-L-glutamyl 5-phosphate + ADP. It participates in amino-acid biosynthesis; L-arginine biosynthesis; N(2)-acetyl-L-ornithine from L-glutamate: step 2/4. Functionally, catalyzes the ATP-dependent phosphorylation of N-acetyl-L-glutamate. The sequence is that of Acetylglutamate kinase from Bordetella parapertussis (strain 12822 / ATCC BAA-587 / NCTC 13253).